A 331-amino-acid chain; its full sequence is CMRF35-like molecule 9 (331 aa).

The N-terminal stretch at 1–18 (MRPLVLLWGCLVLPGYEA) is a signal peptide. The Ig-like V-type domain occupies 19–120 (LKGPKEISGF…LGRDESFEVT (102 aa)). Topologically, residues 19–204 (LKGPKEISGF…KPSVSIPMVR (186 aa)) are extracellular. An intrachain disulfide couples Cys-37 to Cys-106. O-linked (GalNAc...) threonine glycosylation is present at Thr-136. An O-linked (GalNAc...) serine glycan is attached at Ser-140. Thr-143 carries an O-linked (GalNAc...) threonine glycan. Ser-145 carries O-linked (GalNAc...) serine glycosylation. O-linked (GalNAc...) threonine glycosylation is found at Thr-150 and Thr-152. Ser-154 carries O-linked (GalNAc...) serine glycosylation. O-linked (GalNAc...) threonine glycosylation is found at Thr-164, Thr-181, and Thr-182. Residue Ser-186 is glycosylated (O-linked (GalNAc...) serine). Residues 205 to 225 (MMAPVLILLSLLLAAGLIAFG) traverse the membrane as a helical segment. The Cytoplasmic segment spans residues 226–331 (SHMLRWRKKA…ELAFSEFISV (106 aa)). The segment covering 278 to 293 (NPSAVPSPETQNLSQS) has biased composition (polar residues). A disordered region spans residues 278–318 (NPSAVPSPETQNLSQSTEEEEAARSLDDDKEDVMAPPPLQM).

This sequence belongs to the CD300 family. In terms of processing, O-glycosylated with sialylated oligosaccharides. Expressed in monocyte cell lines. Expressed in certain types of endothelial and myeloid lineage cells. Expressed in mesenteric lymph nodes (LNs), spleen, thymus, lung, heart and kidney. Expressed in high endothelial venules (HEVs) in peripheral and mesenteric LNs (at protein level). Highly expressed in heart. Slightly expressed in spleen and thymus. Isoform 5 is expressed preferentially in heart. Isoform 1 is expressed predominantly in kidney and liver.

The protein localises to the apical cell membrane. Its subcellular location is the basolateral cell membrane. The protein resides in the endosome. It localises to the multivesicular body membrane. Functionally, receptor which may mediate L-selectin-dependent lymphocyte rollings. Binds SELL in a calcium dependent manner. Binds lymphocyte. The chain is CMRF35-like molecule 9 (Cd300lg) from Mus musculus (Mouse).